We begin with the raw amino-acid sequence, 280 residues long: Uroporphyrinogen-III C-methyltransferase (280 aa).

S-adenosyl-L-homocysteine is bound by residues P24, 100 to 102 (GGD), 130 to 131 (TA), M184, A213, and A241.

This sequence belongs to the precorrin methyltransferase family. As to quaternary structure, homodimer.

It carries out the reaction uroporphyrinogen III + 2 S-adenosyl-L-methionine = precorrin-2 + 2 S-adenosyl-L-homocysteine + H(+). It catalyses the reaction uroporphyrinogen III + S-adenosyl-L-methionine = precorrin-1 + S-adenosyl-L-homocysteine + H(+). The catalysed reaction is precorrin-1 + S-adenosyl-L-methionine = precorrin-2 + S-adenosyl-L-homocysteine. It participates in cofactor biosynthesis; adenosylcobalamin biosynthesis; precorrin-2 from uroporphyrinogen III: step 1/1. Its pathway is porphyrin-containing compound metabolism; siroheme biosynthesis; precorrin-2 from uroporphyrinogen III: step 1/1. Its activity is regulated as follows. S-adenosylhomocysteine is an extremely powerful competitive inhibitor of the uroporphyrinogen III methylation. SUMT exhibits a substrate inhibition phenomenon at uroporphyrinogen III concentrations above 2 uM; this property might play a regulatory role in cobalamin biosynthesis. The enzyme activity is completely insensitive to feedback inhibition by cobalamin and corrinoid intermediates. Catalyzes the two successive C-2 and C-7 methylation reactions involved in the conversion of uroporphyrinogen III to precorrin-2 via the intermediate formation of precorrin-1. It is a step in the biosynthesis of both cobalamin (vitamin B12) and siroheme. Neither uroporphyrin III nor the chlorin (factor I) is a substrate of SUMT. This chain is Uroporphyrinogen-III C-methyltransferase, found in Sinorhizobium sp.